The following is a 349-amino-acid chain: 4-hydroxythreonine-4-phosphate dehydrogenase (349 aa).

Residues histidine 141 and threonine 142 each coordinate substrate. 3 residues coordinate a divalent metal cation: histidine 176, histidine 221, and histidine 276. 3 residues coordinate substrate: lysine 284, asparagine 293, and arginine 302.

The protein belongs to the PdxA family. Homodimer. Requires Zn(2+) as cofactor. It depends on Mg(2+) as a cofactor. The cofactor is Co(2+).

It is found in the cytoplasm. The enzyme catalyses 4-(phosphooxy)-L-threonine + NAD(+) = 3-amino-2-oxopropyl phosphate + CO2 + NADH. Its pathway is cofactor biosynthesis; pyridoxine 5'-phosphate biosynthesis; pyridoxine 5'-phosphate from D-erythrose 4-phosphate: step 4/5. Functionally, catalyzes the NAD(P)-dependent oxidation of 4-(phosphooxy)-L-threonine (HTP) into 2-amino-3-oxo-4-(phosphooxy)butyric acid which spontaneously decarboxylates to form 3-amino-2-oxopropyl phosphate (AHAP). This Methylorubrum extorquens (strain CM4 / NCIMB 13688) (Methylobacterium extorquens) protein is 4-hydroxythreonine-4-phosphate dehydrogenase.